The primary structure comprises 59 residues: U-actitoxin-Aer2a (59 aa).

Post-translationally, contains 5 disulfide bonds.

It localises to the secreted. The protein resides in the nematocyst. The protein is U-actitoxin-Aer2a of Anemonia erythraea (Sea anemone).